A 934-amino-acid polypeptide reads, in one-letter code: Bifunctional uridylyltransferase/uridylyl-removing enzyme (934 aa).

Residues Met-1 to Ser-379 are uridylyltransferase. The segment at Asp-380 to Thr-736 is uridylyl-removing. The HD domain occupies Val-496 to Met-613. ACT domains lie at Glu-737–Ala-818 and Val-848–Gln-931.

This sequence belongs to the GlnD family. The cofactor is Mg(2+).

It carries out the reaction [protein-PII]-L-tyrosine + UTP = [protein-PII]-uridylyl-L-tyrosine + diphosphate. The enzyme catalyses [protein-PII]-uridylyl-L-tyrosine + H2O = [protein-PII]-L-tyrosine + UMP + H(+). Uridylyltransferase (UTase) activity is inhibited by glutamine, while glutamine activates uridylyl-removing (UR) activity. Modifies, by uridylylation and deuridylylation, the PII regulatory proteins (GlnB and homologs), in response to the nitrogen status of the cell that GlnD senses through the glutamine level. Under low glutamine levels, catalyzes the conversion of the PII proteins and UTP to PII-UMP and PPi, while under higher glutamine levels, GlnD hydrolyzes PII-UMP to PII and UMP (deuridylylation). Thus, controls uridylylation state and activity of the PII proteins, and plays an important role in the regulation of nitrogen assimilation and metabolism. This is Bifunctional uridylyltransferase/uridylyl-removing enzyme from Brucella abortus (strain S19).